The sequence spans 249 residues: tRNA (guanine-N(1)-)-methyltransferase (249 aa).

Residues Gly-113 and 133-138 (IGDFVL) each bind S-adenosyl-L-methionine.

The protein belongs to the RNA methyltransferase TrmD family. As to quaternary structure, homodimer.

The protein localises to the cytoplasm. The catalysed reaction is guanosine(37) in tRNA + S-adenosyl-L-methionine = N(1)-methylguanosine(37) in tRNA + S-adenosyl-L-homocysteine + H(+). Functionally, specifically methylates guanosine-37 in various tRNAs. In Aliivibrio fischeri (strain ATCC 700601 / ES114) (Vibrio fischeri), this protein is tRNA (guanine-N(1)-)-methyltransferase.